Reading from the N-terminus, the 83-residue chain is Snake venom metalloproteinase BnP1 (83 aa).

The 76-residue stretch at 8 to 83 (SYIELAVVAD…NPQCIINQPI (76 aa)) folds into the Peptidase M12B domain. Ca(2+) contacts are provided by Glu11, Cys77, and Asn80.

The protein belongs to the venom metalloproteinase (M12B) family. P-I subfamily. As to quaternary structure, monomer. Zn(2+) is required as a cofactor. In terms of tissue distribution, expressed by the venom gland.

Its subcellular location is the secreted. With respect to regulation, inhibited by EDTA. Functionally, this protein is a zinc protease from snake venom that is devoid of significant myotoxic and hemorrhagic activities. It hydrolyzes the Aalpha-chain and more slowly the Bbeta-chain of fibrin and fibrinogen, without affecting the gamma-chains. It induces cell detachment and a apoptosis (anoikis) in endothelial cells. This chain is Snake venom metalloproteinase BnP1, found in Bothrops pauloensis (Neuwied's lancehead).